The sequence spans 120 residues: Chaperonin GroEL (120 aa).

Position 23–27 (D23–T27) interacts with ATP.

This sequence belongs to the chaperonin (HSP60) family. Forms a cylinder of 14 subunits composed of two heptameric rings stacked back-to-back. Interacts with the co-chaperonin GroES.

The protein localises to the cytoplasm. It catalyses the reaction ATP + H2O + a folded polypeptide = ADP + phosphate + an unfolded polypeptide.. Together with its co-chaperonin GroES, plays an essential role in assisting protein folding. The GroEL-GroES system forms a nano-cage that allows encapsulation of the non-native substrate proteins and provides a physical environment optimized to promote and accelerate protein folding. The sequence is that of Chaperonin GroEL from Mycolicibacterium rhodesiae (Mycobacterium rhodesiae).